Reading from the N-terminus, the 1377-residue chain is DNA-directed RNA polymerase subunit beta (1377 aa).

This sequence belongs to the RNA polymerase beta chain family. As to quaternary structure, the RNAP catalytic core consists of 2 alpha, 1 beta, 1 beta' and 1 omega subunit. When a sigma factor is associated with the core the holoenzyme is formed, which can initiate transcription.

It carries out the reaction RNA(n) + a ribonucleoside 5'-triphosphate = RNA(n+1) + diphosphate. In terms of biological role, DNA-dependent RNA polymerase catalyzes the transcription of DNA into RNA using the four ribonucleoside triphosphates as substrates. In Brucella suis biovar 1 (strain 1330), this protein is DNA-directed RNA polymerase subunit beta.